The following is a 72-amino-acid chain: Lantibiotic Flvbeta.g (72 aa).

Positions 1-34 (MNNNNFDMEKFKKLAAIVSEGEIDEMLDETTVGA) are cleaved as a propeptide — cleaved by FlvT. The segment at residues 36 to 40 (STLPC) is a cross-link (lanthionine (Ser-Cys); by FlvM2). Threonine 37, threonine 46, and threonine 48 each carry 2,3-didehydrobutyrine; by FlvM2. 3 cross-links (beta-methyllanthionine (Thr-Cys); by FlvM2) span residues 55–61 (TTGFDWC), 63–66 (TGAC), and 67–70 (THSC).

Post-translationally, contains LL-lanthionine and DL-beta-methyllanthionine, when coepressed in E.coli with the flavecin synthetase FlvM2.

It is found in the secreted. Lanthionine-containing peptide antibiotic (lantibiotic) that is probably weakly active on Gram-positive bacteria, since its analog [Del1]Flvbeta.g shows weak antibacterial activity against M.luteus. This activity is synergistically enhanced by [Del2]Flvalpha.a, an analog of Flvalpha.a, which is encoded by the same operon than Flvbeta.g. The bactericidal activity of lantibiotics is based on depolarization of energized bacterial cytoplasmic membranes, initiated by the formation of aqueous transmembrane pores. The chain is Lantibiotic Flvbeta.g from Ruminococcus flavefaciens.